Consider the following 146-residue polypeptide: Hemoglobin subunit beta-1 (146 aa).

Residues 2–146 (HWTAEEKSAI…VAHALAHRYH (145 aa)) form the Globin domain. Residues His-63 and His-92 each coordinate heme b.

Belongs to the globin family. Heterotetramer of two alpha chains and two beta chains. In terms of tissue distribution, red blood cells.

In terms of biological role, involved in oxygen transport from the lung to the various peripheral tissues. The chain is Hemoglobin subunit beta-1 from Drymarchon melanurus erebennus (Texas indigo snake).